The primary structure comprises 563 residues: MLLRSAALCRALLARRGRAAGLCRRCVSSLQVANEPVLAFTQGSPERDALQKALKELKGRTEAIPCVVGDEEVWTSDVRYQASPFNHGHKVAKFCYADKALLHRAIGAALAARKEWDLKPVADRAQVFLKAADLLSGPRRAEVLAKTMVGQGKTVIQAEIDAAAELIDFFRFNAKFAMELEGEQPLSVPPSTNSMLYRGLEGFVAAISPFNFTAIGGNLAGAPALMGNVVLWKPSDTAMLASYAVYRILREAGLPPNIIQFVPADGPTFGDTVTSSEHLCGINFTGSVPTFKHLWKQVAQNLDRFRTFPRLAGECGGKNFHFVHRSADVDSVVSGTLRSAFEYGGQKCSACSRLYAPRSLWPQIKGRLLEELGGIKVGNPAEDFGTFFSAVIDAKSFGRIRKWLEHARSSPSLTILAGGHCDDSVGYFVEPCIVETKDPQDPIMKEEIFGPVLAVYVYPDEEYKETLRLVDSTTSYGLTGAVFAQDKDVLREATELLRHAAGNFYINDKSTGSVVGQQPFGGARASGTNDKPGGPHYVLRWTSPQVIKETHGPLGDWRYPYMQ.

A mitochondrion-targeting transit peptide spans 1 to 24; that stretch reads MLLRSAALCRALLARRGRAAGLCR. Phosphoserine is present on serine 44. The residue at position 52 (lysine 52) is an N6-acetyllysine. 5 positions are modified to N6-acetyllysine; alternate: lysine 93, lysine 99, lysine 114, lysine 130, and lysine 175. N6-succinyllysine; alternate is present on residues lysine 93, lysine 99, lysine 114, lysine 130, and lysine 175. NAD(+) contacts are provided by residues serine 208, lysine 233, and 286–290; that span reads GSVPT. The active-site Proton acceptor is the glutamate 314. The residue at position 318 (lysine 318) is an N6-acetyllysine. The residue at position 347 (lysine 347) is an N6-succinyllysine. Cysteine 348 functions as the Nucleophile in the catalytic mechanism. N6-acetyllysine occurs at positions 365 and 376. Residue lysine 395 is modified to N6-succinyllysine. Residue glutamate 447 participates in NAD(+) binding. Residue lysine 509 is modified to N6-acetyllysine; alternate. At lysine 509 the chain carries N6-succinyllysine; alternate. Residue serine 513 participates in substrate binding. An N6-acetyllysine modification is found at lysine 531.

It belongs to the aldehyde dehydrogenase family. In terms of assembly, homodimer.

Its subcellular location is the mitochondrion matrix. The enzyme catalyses L-glutamate 5-semialdehyde + NAD(+) + H2O = L-glutamate + NADH + 2 H(+). It functions in the pathway amino-acid degradation; L-proline degradation into L-glutamate; L-glutamate from L-proline: step 2/2. Irreversible conversion of delta-1-pyrroline-5-carboxylate (P5C), derived either from proline or ornithine, to glutamate. This is a necessary step in the pathway interconnecting the urea and tricarboxylic acid cycles. The preferred substrate is glutamic gamma-semialdehyde, other substrates include succinic, glutaric and adipic semialdehydes. The chain is Delta-1-pyrroline-5-carboxylate dehydrogenase, mitochondrial (ALDH4A1) from Bos taurus (Bovine).